The chain runs to 466 residues: Histidine--tRNA ligase (466 aa).

Belongs to the class-II aminoacyl-tRNA synthetase family. As to quaternary structure, homodimer.

The protein resides in the cytoplasm. The catalysed reaction is tRNA(His) + L-histidine + ATP = L-histidyl-tRNA(His) + AMP + diphosphate + H(+). This chain is Histidine--tRNA ligase (hisS), found in Bifidobacterium longum (strain NCC 2705).